A 132-amino-acid polypeptide reads, in one-letter code: Intraflagellar transport protein 20 homolog A (132 aa).

Residues 87-112 (EAQQQQLYALIAEKKMQLERYRIEYD) are a coiled coil.

Its subcellular location is the golgi apparatus. It localises to the cis-Golgi network. The protein localises to the cytoplasm. It is found in the cytoskeleton. The protein resides in the microtubule organizing center. Its subcellular location is the centrosome. It localises to the centriole. The protein localises to the cell projection. It is found in the cilium. Its function is as follows. Involved in ciliary process assembly. May play a role in the trafficking of ciliary membrane proteins from the Golgi complex to the cilium. Regulates the platelet-derived growth factor receptor-alpha (PDGFRA) signaling pathway. Plays an important role in spermatogenesis, particularly spermiogenesis, when germ cells form flagella. This Xenopus laevis (African clawed frog) protein is Intraflagellar transport protein 20 homolog A (ift20-a).